Reading from the N-terminus, the 577-residue chain is MALHHLRHAPLALRLARLPRLAPSPPPPAARLLLLLAPSQHPAPPWRLLSRPRALATAAAEADDAGAGGNGDGDGFFSEESTSWESLGVSDRLASALHGAGLARPSLVQAACIPHVLTTNDVIVAAETGSGKTHGYLVPLIEKLCSKSISAEDGNSQDVTSGSPNIALVLCPNVMLCEQVVRMANSLVDESGEPLKSAAAVCGPKGWPTVRPDILVATPAALLNYLFDYDPEKRRRERFLRNVKFIVFDEADMLLCGSFENQVIRLIHMLRFDEKLLSRMEDSGKEISLGDTNEYREDSDSQSAELSADDEENEDGLVQHRPVNVENAHIGAHKKDWRRVRKVYRRSKQYVFVAATLPQSGKKTAGGVLKRMFPNAVWVSGAYLHRHNPRLERRWIEVTADTQVSALLDAVKYGLKNEVHDTKLGPNRTMVFTNTVDAANSVSDILQRVGVPCILYHRDSSLEERAKNLQSFRENGGVLVCTDAAARGLDVPNVSHVIQAEFAACAVDFLHRVGRTARAGQSGIVTSLYTEANRDLVRAVRQAEELAQPVEKAFSRKRSFRNKLKKQALHKSTALLS.

The Q motif motif lies at 82 to 110; the sequence is TSWESLGVSDRLASALHGAGLARPSLVQA. Positions 113–375 constitute a Helicase ATP-binding domain; that stretch reads IPHVLTTNDV…GGVLKRMFPN (263 aa). 126–133 lines the ATP pocket; the sequence is AETGSGKT. A DEAD box motif is present at residues 249–252; sequence DEAD. Residues 288–317 are disordered; that stretch reads SLGDTNEYREDSDSQSAELSADDEENEDGL. Residues 407–568 form the Helicase C-terminal domain; that stretch reads LLDAVKYGLK…SFRNKLKKQA (162 aa).

It belongs to the DEAD box helicase family.

The enzyme catalyses ATP + H2O = ADP + phosphate + H(+). The chain is DEAD-box ATP-dependent RNA helicase 22 from Oryza sativa subsp. japonica (Rice).